The following is a 46-amino-acid chain: Bacteriocin acidocin 8912 (46 aa).

Positions 1–20 (MISSHQKTLTDKELALISGG) are excised as a propeptide.

It localises to the secreted. Has a bactericidal effect on sensitive cells but not a bacteriolytic effect. The protein is Bacteriocin acidocin 8912 (acdT) of Lactobacillus acidophilus.